Reading from the N-terminus, the 612-residue chain is Elongation factor 4 (612 aa).

Residues 12-194 (SRIRNFSIIA…QIVEKVPAPA (183 aa)) enclose the tr-type G domain. Residues 24-29 (DHGKST) and 141-144 (NKID) contribute to the GTP site.

It belongs to the TRAFAC class translation factor GTPase superfamily. Classic translation factor GTPase family. LepA subfamily.

Its subcellular location is the cell membrane. It catalyses the reaction GTP + H2O = GDP + phosphate + H(+). Required for accurate and efficient protein synthesis under certain stress conditions. May act as a fidelity factor of the translation reaction, by catalyzing a one-codon backward translocation of tRNAs on improperly translocated ribosomes. Back-translocation proceeds from a post-translocation (POST) complex to a pre-translocation (PRE) complex, thus giving elongation factor G a second chance to translocate the tRNAs correctly. Binds to ribosomes in a GTP-dependent manner. The protein is Elongation factor 4 of Bacillus pumilus (strain SAFR-032).